The chain runs to 298 residues: Fluorinase (298 aa).

Residues aspartate 14, 19-21 (DDS), tyrosine 75, serine 156, aspartate 209, asparagine 214, 268-269 (SR), and 276-278 (RNA) contribute to the S-adenosyl-L-methionine site.

This sequence belongs to the SAM hydrolase / SAM-dependent halogenase family.

It carries out the reaction fluoride + S-adenosyl-L-methionine = 5'-deoxy-5'-fluoroadenosine + L-methionine. Its function is as follows. Catalyzes the formation of a C-F bond by combining S-adenosyl-L-methionine (SAM) and fluoride to generate 5'-fluoro-5'-deoxyadenosine (5'-FDA) and L-methionine. The chain is Fluorinase from Actinoplanes sp. (strain N902-109).